A 242-amino-acid polypeptide reads, in one-letter code: Fibrinolytic enzyme, isozyme C (242 aa).

A Peptidase S1 domain is found at 1–242; it reads VIGGTNASPG…YLGWIGDNSR (242 aa). The cysteines at positions 29 and 45 are disulfide-linked. Active-site charge relay system residues include histidine 44 and aspartate 93. 3 disulfides stabilise this stretch: cysteine 127–cysteine 197, cysteine 158–cysteine 176, and cysteine 187–cysteine 219. The active-site Charge relay system is the serine 191.

It belongs to the peptidase S1 family.

This chain is Fibrinolytic enzyme, isozyme C, found in Lumbricus rubellus (Humus earthworm).